A 185-amino-acid chain; its full sequence is MTNEIRKDAETRMDKCVEAFKNQINRIRTGRASPSILDGIHVEYYGSATPLRQLANVVVEDSRTLAISVFDRSLSPAVEKAIMASDLGLNPSSAGTVIRVPLPPLTEERRKDLIKVVRGEAEQGRISVRNVRRDANDKFKALLKDKAISEDEERRAQDDVQKLTDNFIKKVDVALAEKEAELMEF.

It belongs to the RRF family.

It localises to the cytoplasm. Its function is as follows. Responsible for the release of ribosomes from messenger RNA at the termination of protein biosynthesis. May increase the efficiency of translation by recycling ribosomes from one round of translation to another. This Pectobacterium atrosepticum (strain SCRI 1043 / ATCC BAA-672) (Erwinia carotovora subsp. atroseptica) protein is Ribosome-recycling factor.